Reading from the N-terminus, the 501-residue chain is Ribose import ATP-binding protein RbsA (501 aa).

ABC transporter domains are found at residues 5–241 (LQLK…VGRK) and 252–495 (APGD…VGKL). 37–44 (GENGAGKS) is a binding site for ATP.

This sequence belongs to the ABC transporter superfamily. Ribose importer (TC 3.A.1.2.1) family. The complex is composed of an ATP-binding protein (RbsA), two transmembrane proteins (RbsC) and a solute-binding protein (RbsB).

It localises to the cell inner membrane. It catalyses the reaction D-ribose(out) + ATP + H2O = D-ribose(in) + ADP + phosphate + H(+). In terms of biological role, part of the ABC transporter complex RbsABC involved in ribose import. Responsible for energy coupling to the transport system. The protein is Ribose import ATP-binding protein RbsA of Escherichia coli (strain K12).